Reading from the N-terminus, the 232-residue chain is Orotidine 5'-phosphate decarboxylase (232 aa).

Substrate is bound by residues aspartate 13, lysine 35, 62–71 (DLKFHDIPNT), threonine 122, arginine 182, glutamine 191, glycine 211, and arginine 212. The Proton donor role is filled by lysine 64.

This sequence belongs to the OMP decarboxylase family. Type 1 subfamily. In terms of assembly, homodimer.

It carries out the reaction orotidine 5'-phosphate + H(+) = UMP + CO2. It participates in pyrimidine metabolism; UMP biosynthesis via de novo pathway; UMP from orotate: step 2/2. Catalyzes the decarboxylation of orotidine 5'-monophosphate (OMP) to uridine 5'-monophosphate (UMP). The polypeptide is Orotidine 5'-phosphate decarboxylase (Pseudomonas fluorescens (strain Pf0-1)).